The following is a 71-amino-acid chain: Putative antitoxin VapB14 (71 aa).

In terms of biological role, putative antitoxin component of a possible type II toxin-antitoxin (TA) system. The cognate toxin is VapB14. The polypeptide is Putative antitoxin VapB14 (vapB14) (Mycobacterium tuberculosis (strain ATCC 25618 / H37Rv)).